A 181-amino-acid polypeptide reads, in one-letter code: Bifunctional protein PyrR (181 aa).

Positions 101-113 (VIVVDDVLYTGRT) match the PRPP-binding motif.

This sequence belongs to the purine/pyrimidine phosphoribosyltransferase family. PyrR subfamily. Homodimer and homohexamer; in equilibrium.

The enzyme catalyses UMP + diphosphate = 5-phospho-alpha-D-ribose 1-diphosphate + uracil. Functionally, regulates transcriptional attenuation of the pyrimidine nucleotide (pyr) operon by binding in a uridine-dependent manner to specific sites on pyr mRNA. This disrupts an antiterminator hairpin in the RNA and favors formation of a downstream transcription terminator, leading to a reduced expression of downstream genes. Also displays a weak uracil phosphoribosyltransferase activity which is not physiologically significant. The polypeptide is Bifunctional protein PyrR (Bacillus velezensis (strain DSM 23117 / BGSC 10A6 / LMG 26770 / FZB42) (Bacillus amyloliquefaciens subsp. plantarum)).